Here is a 230-residue protein sequence, read N- to C-terminus: Thiamine-triphosphatase (230 aa).

Residue Ala2 is modified to N-acetylalanine. The region spanning 5 to 201 (LIEVERKFLP…AKLIVYLQRF (197 aa)) is the CYTH domain. Mg(2+)-binding residues include Glu7 and Glu9. Positions 11, 55, 57, 65, and 125 each coordinate substrate. 3 residues coordinate Mg(2+): Asp145, Glu157, and Glu159. Glu157 provides a ligand contact to substrate. Lys193 is a binding site for substrate.

It belongs to the ThTPase family. Monomer. Requires Mg(2+) as cofactor. Widely expressed but at a low level.

It is found in the cytoplasm. It carries out the reaction thiamine triphosphate + H2O = thiamine diphosphate + phosphate + H(+). Hydrolase highly specific for thiamine triphosphate (ThTP). In Homo sapiens (Human), this protein is Thiamine-triphosphatase (THTPA).